Reading from the N-terminus, the 387-residue chain is N-acetyldiaminopimelate deacetylase (387 aa).

The active site involves aspartate 75. Catalysis depends on glutamate 134, which acts as the Proton acceptor.

Belongs to the peptidase M20A family. N-acetyldiaminopimelate deacetylase subfamily.

It catalyses the reaction N-acetyl-(2S,6S)-2,6-diaminopimelate + H2O = (2S,6S)-2,6-diaminopimelate + acetate. The protein operates within amino-acid biosynthesis; L-lysine biosynthesis via DAP pathway; LL-2,6-diaminopimelate from (S)-tetrahydrodipicolinate (acetylase route): step 3/3. Its function is as follows. Catalyzes the conversion of N-acetyl-diaminopimelate to diaminopimelate and acetate. The polypeptide is N-acetyldiaminopimelate deacetylase (Leuconostoc citreum (strain KM20)).